Consider the following 675-residue polypeptide: MEVIRYPNSPFKLHQPFPPAGDQPTAIAGLIEGLSDGLAYQTLLGVTGSGKTYTMANVIAQSGRPAIIMAHNKTLAAQLYAEMREFFPENAVEYFVSYYDYYQPEAYVPSRDLFIEKDSAINEHIEQMRLSATKNLMTRDDVIIVATVSAIYGIGDPTEYQQMVLSVKEGDTIEQRDIIATLVSMQYERGDLDFKRGSFRVRGDVIDVYPAESSENALRISLFDDEIDRLDMFDPLSGSLHQRVGRYTVFPSSHYVTPRDTVLRACESIKEELRERIEFFAREQRPVEQQRIEQRTRFDLEMLYEMGFCKGIENYSRHFSGKKEGEPPPTLMDYLPDNAIMFIDESHVTVTQIGGMYKGDASRKQNLVDYGFRLPSARDNRPLKFHEFEKVMPQTVFVSATPAKYEEEHAGQVVEQVVRPTGLVDPQTIIRPVATQVDDLMSEINDRIQKGERVLVTTLTKRMAEQLTDYYSELGIKVRYLHSDIDTVERVEIIRDLRLGLFDVLVGINLLREGLDIPEVSLVAILDADKEGFLRSHRSLIQTIGRAARNVNGVAILYADKITDSMKAAVDETERRREKQIKFNEEHGIVPQQIKKQVKDIIDGVYHEEDSGKGRRQGKNKVKVGEIHNEEDAIKEIAKLEKAMQQAARDLQFEEAAVLRDRISNIKENLLFGAE.

The region spanning 32 to 417 (EGLSDGLAYQ…EHAGQVVEQV (386 aa)) is the Helicase ATP-binding domain. 45 to 52 (GVTGSGKT) contributes to the ATP binding site. The Beta-hairpin signature appears at 98–121 (YYDYYQPEAYVPSRDLFIEKDSAI). Residues 436-602 (QVDDLMSEIN…QIKKQVKDII (167 aa)) form the Helicase C-terminal domain. The UVR domain maps to 634-669 (IKEIAKLEKAMQQAARDLQFEEAAVLRDRISNIKEN).

The protein belongs to the UvrB family. As to quaternary structure, forms a heterotetramer with UvrA during the search for lesions. Interacts with UvrC in an incision complex.

It is found in the cytoplasm. Its function is as follows. The UvrABC repair system catalyzes the recognition and processing of DNA lesions. A damage recognition complex composed of 2 UvrA and 2 UvrB subunits scans DNA for abnormalities. Upon binding of the UvrA(2)B(2) complex to a putative damaged site, the DNA wraps around one UvrB monomer. DNA wrap is dependent on ATP binding by UvrB and probably causes local melting of the DNA helix, facilitating insertion of UvrB beta-hairpin between the DNA strands. Then UvrB probes one DNA strand for the presence of a lesion. If a lesion is found the UvrA subunits dissociate and the UvrB-DNA preincision complex is formed. This complex is subsequently bound by UvrC and the second UvrB is released. If no lesion is found, the DNA wraps around the other UvrB subunit that will check the other stand for damage. This Neisseria gonorrhoeae (strain ATCC 700825 / FA 1090) protein is UvrABC system protein B.